The chain runs to 485 residues: Glutamyl-tRNA(Gln) amidotransferase subunit A (485 aa).

Active-site charge relay system residues include K78 and S153. Catalysis depends on S177, which acts as the Acyl-ester intermediate.

The protein belongs to the amidase family. GatA subfamily. Heterotrimer of A, B and C subunits.

It carries out the reaction L-glutamyl-tRNA(Gln) + L-glutamine + ATP + H2O = L-glutaminyl-tRNA(Gln) + L-glutamate + ADP + phosphate + H(+). Allows the formation of correctly charged Gln-tRNA(Gln) through the transamidation of misacylated Glu-tRNA(Gln) in organisms which lack glutaminyl-tRNA synthetase. The reaction takes place in the presence of glutamine and ATP through an activated gamma-phospho-Glu-tRNA(Gln). The sequence is that of Glutamyl-tRNA(Gln) amidotransferase subunit A from Syntrophus aciditrophicus (strain SB).